Consider the following 352-residue polypeptide: Homeobox protein Mohawk (352 aa).

The disordered stretch occupies residues glycine 19–aspartate 53. The segment at residues valine 71 to valine 132 is a DNA-binding region (homeobox; TALE-type). 2 disordered regions span residues leucine 157–glutamate 194 and threonine 245–glutamate 272.

Belongs to the TALE/IRO homeobox family.

It is found in the nucleus. Functionally, may act as a morphogenetic regulator of cell adhesion. The sequence is that of Homeobox protein Mohawk (MKX) from Pongo abelii (Sumatran orangutan).